Consider the following 143-residue polypeptide: Nucleoside diphosphate kinase (143 aa).

Positions 11, 59, 87, 93, 104, and 114 each coordinate ATP. The active-site Pros-phosphohistidine intermediate is H117.

This sequence belongs to the NDK family. As to quaternary structure, homotetramer. It depends on Mg(2+) as a cofactor.

It is found in the cytoplasm. It carries out the reaction a 2'-deoxyribonucleoside 5'-diphosphate + ATP = a 2'-deoxyribonucleoside 5'-triphosphate + ADP. The catalysed reaction is a ribonucleoside 5'-diphosphate + ATP = a ribonucleoside 5'-triphosphate + ADP. Its function is as follows. Major role in the synthesis of nucleoside triphosphates other than ATP. The ATP gamma phosphate is transferred to the NDP beta phosphate via a ping-pong mechanism, using a phosphorylated active-site intermediate. The polypeptide is Nucleoside diphosphate kinase (Shewanella woodyi (strain ATCC 51908 / MS32)).